The following is a 211-amino-acid chain: Arginine exporter protein ArgO (211 aa).

6 consecutive transmembrane segments (helical) span residues 1 to 21 (MISY…PLGP), 37 to 57 (LMIA…GIFG), 68 to 88 (LLAL…FGAL), 111 to 131 (IIAT…DTFV), 147 to 167 (WFAL…ALLA), and 179 to 199 (AQRI…FQLA).

This sequence belongs to the LysE/ArgO transporter (TC 2.A.75) family.

It is found in the cell inner membrane. The catalysed reaction is L-arginine(in) = L-arginine(out). Involved in the export of arginine. Important to control the intracellular level of arginine and the correct balance between arginine and lysine. The chain is Arginine exporter protein ArgO from Salmonella typhimurium (strain LT2 / SGSC1412 / ATCC 700720).